Reading from the N-terminus, the 485-residue chain is Glutamyl-tRNA(Gln) amidotransferase subunit A (485 aa).

Active-site charge relay system residues include Lys-79 and Ser-154. The Acyl-ester intermediate role is filled by Ser-178.

The protein belongs to the amidase family. GatA subfamily. In terms of assembly, heterotrimer of A, B and C subunits.

It catalyses the reaction L-glutamyl-tRNA(Gln) + L-glutamine + ATP + H2O = L-glutaminyl-tRNA(Gln) + L-glutamate + ADP + phosphate + H(+). Allows the formation of correctly charged Gln-tRNA(Gln) through the transamidation of misacylated Glu-tRNA(Gln) in organisms which lack glutaminyl-tRNA synthetase. The reaction takes place in the presence of glutamine and ATP through an activated gamma-phospho-Glu-tRNA(Gln). The sequence is that of Glutamyl-tRNA(Gln) amidotransferase subunit A from Clostridium botulinum (strain Loch Maree / Type A3).